Here is a 159-residue protein sequence, read N- to C-terminus: Serine-protein kinase RsbW (159 aa).

This sequence belongs to the anti-sigma-factor family.

The catalysed reaction is L-seryl-[protein] + ATP = O-phospho-L-seryl-[protein] + ADP + H(+). It carries out the reaction L-threonyl-[protein] + ATP = O-phospho-L-threonyl-[protein] + ADP + H(+). Negative regulator of sigma-B activity. Phosphorylates and inactivates its specific antagonist protein, RsbV. Upon phosphorylation of RsbV, RsbW is released and binds to sigma-B, thereby blocking its ability to form an RNA polymerase holoenzyme (E-sigma-B). The protein is Serine-protein kinase RsbW of Staphylococcus aureus (strain MRSA252).